The chain runs to 340 residues: MKQKVAVLGPGSWGTALAQVLAENGHEVCIWGNKPEQIDEINTKHTNKHYLPELILPTSIQATTDLATALVDVDAVLFVVPTKAIRSVAQEVAQHLKTKPIIIHASKGLEQGTHKRISEVIAEEIPAEKRQGIVVLSGPSHAEEVAVHDITTITAASENLADAVYVQELFMNDYFRIYTNDDVIGVETGAALKNIIALGAGAIHGLGFGDNAKAAIMTRGLAEISRLGVAMGANPLTFIGLSGVGDLIVTCTSVHSRNWRAGNLLGKGHKLDEVLENMGMIVEGVSTTKAAYELAQQLEVEMPITETIYNVLYNDEDVQQAAKEIMLRDGKTENEFTLDF.

NADPH is bound by residues Ser-12, Trp-13, Lys-34, and Lys-107. 3 residues coordinate sn-glycerol 3-phosphate: Lys-107, Gly-138, and Ser-140. NADPH is bound at residue Ala-142. Sn-glycerol 3-phosphate contacts are provided by Lys-193, Asp-246, Ser-256, Arg-257, and Asn-258. Lys-193 functions as the Proton acceptor in the catalytic mechanism. Arg-257 contacts NADPH. Residues Ile-281 and Glu-283 each contribute to the NADPH site.

The protein belongs to the NAD-dependent glycerol-3-phosphate dehydrogenase family.

Its subcellular location is the cytoplasm. It carries out the reaction sn-glycerol 3-phosphate + NAD(+) = dihydroxyacetone phosphate + NADH + H(+). The catalysed reaction is sn-glycerol 3-phosphate + NADP(+) = dihydroxyacetone phosphate + NADPH + H(+). The protein operates within membrane lipid metabolism; glycerophospholipid metabolism. Its function is as follows. Catalyzes the reduction of the glycolytic intermediate dihydroxyacetone phosphate (DHAP) to sn-glycerol 3-phosphate (G3P), the key precursor for phospholipid synthesis. The protein is Glycerol-3-phosphate dehydrogenase [NAD(P)+] of Enterococcus faecalis (strain ATCC 700802 / V583).